The primary structure comprises 452 residues: Putative purine permease CPE0397 (452 aa).

A run of 12 helical transmembrane segments spans residues 34 to 54, 58 to 78, 83 to 103, 108 to 128, 138 to 158, 172 to 192, 201 to 221, 250 to 270, 326 to 346, 348 to 368, 383 to 403, and 412 to 432; these read IFAA…SLGF, VTTA…IIQA, KVGA…SPAI, VLGL…EVIL, FFPP…LLPV, YASL…LLLN, SASI…LGLV, MAFI…LKAI, AVMA…AAII, GIPN…VAAA, LLII…PDVI, and MIFS…NAVL.

This sequence belongs to the nucleobase:cation symporter-2 (NCS2) (TC 2.A.40) family.

It is found in the cell membrane. The polypeptide is Putative purine permease CPE0397 (cpx) (Clostridium perfringens (strain 13 / Type A)).